We begin with the raw amino-acid sequence, 309 residues long: Homoserine kinase (309 aa).

91-101 (PIGSGLGSSAC) provides a ligand contact to ATP.

The protein belongs to the GHMP kinase family. Homoserine kinase subfamily.

It localises to the cytoplasm. It carries out the reaction L-homoserine + ATP = O-phospho-L-homoserine + ADP + H(+). It functions in the pathway amino-acid biosynthesis; L-threonine biosynthesis; L-threonine from L-aspartate: step 4/5. Its function is as follows. Catalyzes the ATP-dependent phosphorylation of L-homoserine to L-homoserine phosphate. This chain is Homoserine kinase, found in Buchnera aphidicola subsp. Acyrthosiphon pisum (strain 5A).